Consider the following 129-residue polypeptide: Protein UL131A (129 aa).

The signal sequence occupies residues Met-1–Gly-18.

Forms the envelope pentamer complex (PC) composed of gH, gL, UL128, UL130, and UL131A. The pentamer interacts with host NRP2. The interaction with gH is important for the formation of UL128, UL130, gH-gL complex.

The protein resides in the virion membrane. Functionally, plays a role in viral entry into host cells. Forms a pentameric complex at the surface of the viral envelope together with gH, gL, UL130 and UL131. This complex is required for entry in epithelial, endothelial and myeloid host cells. Mechanistically, engages host receptor(s) including neurophilin 2/NRP2 to mediate infection. Contributes to the formation of the complex between UL128, UL130 and gH-gL. The chain is Protein UL131A (UL131A) from Human cytomegalovirus (strain Merlin) (HHV-5).